The following is a 239-amino-acid chain: Large ribosomal subunit protein uL30 (239 aa).

The interval 1 to 22 (MEGVMSEAPQSSIRKKEYEARM) is disordered.

This sequence belongs to the universal ribosomal protein uL30 family.

The sequence is that of Large ribosomal subunit protein uL30 (RPL7) from Encephalitozoon cuniculi (strain GB-M1) (Microsporidian parasite).